The following is a 111-amino-acid chain: Pyrimidine/purine nucleoside phosphorylase 1 (111 aa).

It belongs to the nucleoside phosphorylase PpnP family.

It carries out the reaction a purine D-ribonucleoside + phosphate = a purine nucleobase + alpha-D-ribose 1-phosphate. It catalyses the reaction adenosine + phosphate = alpha-D-ribose 1-phosphate + adenine. The enzyme catalyses cytidine + phosphate = cytosine + alpha-D-ribose 1-phosphate. The catalysed reaction is guanosine + phosphate = alpha-D-ribose 1-phosphate + guanine. It carries out the reaction inosine + phosphate = alpha-D-ribose 1-phosphate + hypoxanthine. It catalyses the reaction thymidine + phosphate = 2-deoxy-alpha-D-ribose 1-phosphate + thymine. The enzyme catalyses uridine + phosphate = alpha-D-ribose 1-phosphate + uracil. The catalysed reaction is xanthosine + phosphate = alpha-D-ribose 1-phosphate + xanthine. Catalyzes the phosphorolysis of diverse nucleosides, yielding D-ribose 1-phosphate and the respective free bases. Can use uridine, adenosine, guanosine, cytidine, thymidine, inosine and xanthosine as substrates. Also catalyzes the reverse reactions. The protein is Pyrimidine/purine nucleoside phosphorylase 1 of Psychrobacter cryohalolentis (strain ATCC BAA-1226 / DSM 17306 / VKM B-2378 / K5).